Consider the following 109-residue polypeptide: Cell division suppressor protein YneA (109 aa).

Positions 39–90 (SEVNVNEGDSLWALADQYAGKSDMAKADFVSWVEKENNLSDGHVEAGDSVVI) constitute a LysM domain.

The protein belongs to the YneA family.

The protein resides in the cytoplasm. Inhibits cell division during the SOS response. Affects a later stage of the cell division protein assembly, after the assembly of the Z ring, by probably suppressing recruitment of FtsL and/or DivIC to the division machinery. The chain is Cell division suppressor protein YneA from Listeria monocytogenes serovar 1/2a (strain ATCC BAA-679 / EGD-e).